A 552-amino-acid polypeptide reads, in one-letter code: Beta-hexosaminidase A (552 aa).

The N-terminal stretch at 1 to 15 (MRLIVLSLLFTSTLA) is a signal peptide. A glycan (N-linked (GlcNAc...) asparagine) is linked at Asn44. Glu322 (proton donor) is an active-site residue. N-linked (GlcNAc...) asparagine glycosylation is found at Asn348, Asn409, and Asn457.

Belongs to the glycosyl hydrolase 20 family.

It localises to the lysosome. The enzyme catalyses Hydrolysis of terminal non-reducing N-acetyl-D-hexosamine residues in N-acetyl-beta-D-hexosaminides.. Functionally, responsible for the degradation of GM2 gangliosides, and a variety of other molecules containing terminal N-acetyl hexosamines. Degrades chitotriose. In Caenorhabditis briggsae, this protein is Beta-hexosaminidase A.